Consider the following 120-residue polypeptide: Autophagy-related protein 8C (120 aa).

A disordered region spans residues 1-20 (MARSSFKLEHPLERRQAEAN). The Phosphatidylethanolamine amidated glycine moiety is linked to residue glycine 117. Residues 118–120 (LFV) constitute a propeptide, removed in mature form.

The protein belongs to the ATG8 family. Interacts with ATG4. The C-terminal 3 residues are removed by ATG4 to expose Gly-117 at the C-terminus. The C-terminal Gly is then amidated with phosphatidylethanolamine by an activating system similar to that for ubiquitin.

It localises to the cytoplasmic vesicle. It is found in the autophagosome membrane. Its subcellular location is the vacuole membrane. The protein resides in the cytoplasm. The protein localises to the cytoskeleton. Its function is as follows. Ubiquitin-like modifier involved in autophagosomes formation. May mediate the delivery of the autophagosomes to the vacuole via the microtubule cytoskeleton. The protein is Autophagy-related protein 8C (ATG8C) of Oryza sativa subsp. indica (Rice).